Reading from the N-terminus, the 219-residue chain is MIKIENLTKSYRTPTGRHYVFKNLNIIFPKGYNIALIGQNGAGKSTLLRIIGGIDRPDSGNIITEHKISWPVGLAGGFQGSLTGRENVKFVARLYAKRDELNERVDFVEEFSELGKYFDMPIKTYSSGMRSRLAFGLSMAFKFDYYLIDEITAVGDAKFKKKCSDIFDKIREKSHLIMVSHSERALKEYCDVAIYLNKEGQGKFYKNVTEAIADYKKDL.

The ABC transporter domain maps to 2–218 (IKIENLTKSY…TEAIADYKKD (217 aa)). 38–45 (GQNGAGKS) contributes to the ATP binding site.

Belongs to the ABC transporter superfamily.

Its subcellular location is the cell inner membrane. Its function is as follows. Putative ATP-binding protein, and an energy coupling component for the transport of polysialic acid across the cytoplasmic membrane. In Escherichia coli, this protein is Polysialic acid transport ATP-binding protein KpsT (kpsT).